The primary structure comprises 843 residues: Protein P (843 aa).

Residues 1–177 form a terminal protein domain (TP) region; it reads MPLSYQHFRK…FCGSPYSWEQ (177 aa). A spacer region spans residues 178 to 346; it reads ELQHGRLVFQ…YCLSHIVNLL (169 aa). The tract at residues 347 to 690 is polymerase/reverse transcriptase domain (RT); it reads EDWGPCTEHG…YMNLYPVARQ (344 aa). Residues 357 to 600 form the Reverse transcriptase domain; that stretch reads EHHIRIPRTP…YSLNFMGYVI (244 aa). Mg(2+) is bound by residues Asp-429, Asp-551, and Asp-552.

This sequence belongs to the hepadnaviridae P protein family.

The catalysed reaction is DNA(n) + a 2'-deoxyribonucleoside 5'-triphosphate = DNA(n+1) + diphosphate. It catalyses the reaction Endonucleolytic cleavage to 5'-phosphomonoester.. Activated by host HSP70 and HSP40 in vitro to be able to bind the epsilon loop of the pgRNA. Because deletion of the RNase H region renders the protein partly chaperone-independent, the chaperones may be needed indirectly to relieve occlusion of the RNA-binding site by this domain. Inhibited by several reverse-transcriptase inhibitors: Lamivudine, Adefovir and Entecavir. In terms of biological role, multifunctional enzyme that converts the viral RNA genome into dsDNA in viral cytoplasmic capsids. This enzyme displays a DNA polymerase activity that can copy either DNA or RNA templates, and a ribonuclease H (RNase H) activity that cleaves the RNA strand of RNA-DNA heteroduplexes in a partially processive 3'- to 5'-endonucleasic mode. Neo-synthesized pregenomic RNA (pgRNA) are encapsidated together with the P protein, and reverse-transcribed inside the nucleocapsid. Initiation of reverse-transcription occurs first by binding the epsilon loop on the pgRNA genome, and is initiated by protein priming, thereby the 5'-end of (-)DNA is covalently linked to P protein. Partial (+)DNA is synthesized from the (-)DNA template and generates the relaxed circular DNA (RC-DNA) genome. After budding and infection, the RC-DNA migrates in the nucleus, and is converted into a plasmid-like covalently closed circular DNA (cccDNA). The activity of P protein does not seem to be necessary for cccDNA generation, and is presumably released from (+)DNA by host nuclear DNA repair machinery. This chain is Protein P, found in Homo sapiens (Human).